The following is a 216-amino-acid chain: Somatotropin (216 aa).

A signal peptide spans 1–26 (MAADPQSSVLLAFALLCLPWPQEVGA). Residue His-45 coordinates Zn(2+). Residues Cys-78 and Cys-189 are joined by a disulfide bond. At Ser-131 the chain carries Phosphoserine. Position 198 (Glu-198) interacts with Zn(2+). A disulfide bridge connects residues Cys-206 and Cys-214.

This sequence belongs to the somatotropin/prolactin family.

It localises to the secreted. In terms of biological role, plays an important role in growth control. Its major role in stimulating body growth is to stimulate the liver and other tissues to secrete IGF1. It stimulates both the differentiation and proliferation of myoblasts. It also stimulates amino acid uptake and protein synthesis in muscle and other tissues. This Ailuropoda melanoleuca (Giant panda) protein is Somatotropin (GH1).